Here is a 152-residue protein sequence, read N- to C-terminus: Small ribosomal subunit protein uS13 (152 aa).

An N-acetylserine modification is found at Ser2. Residue Lys91 forms a Glycyl lysine isopeptide (Lys-Gly) (interchain with G-Cter in SUMO2) linkage. N6-acetyllysine; alternate occurs at positions 94 and 106. Residues Lys94 and Lys106 each participate in a glycyl lysine isopeptide (Lys-Gly) (interchain with G-Cter in SUMO2); alternate cross-link.

This sequence belongs to the universal ribosomal protein uS13 family. Component of the small ribosomal subunit.

It localises to the cytoplasm. Its function is as follows. Component of the small ribosomal subunit. The ribosome is a large ribonucleoprotein complex responsible for the synthesis of proteins in the cell. This chain is Small ribosomal subunit protein uS13 (RPS18), found in Homo sapiens (Human).